The following is a 127-amino-acid chain: UPF0325 protein ASA_3165 (127 aa).

Belongs to the UPF0325 family.

The chain is UPF0325 protein ASA_3165 from Aeromonas salmonicida (strain A449).